Here is a 241-residue protein sequence, read N- to C-terminus: Fas-associated death domain protein (241 aa).

The death-inducing stretch occupies residues 1 to 101 (MPGNHWYDIL…VNIYQEERLA (101 aa)). The Death domain occupies 151-237 (RKRTAVFNKI…RNDIKRKVEQ (87 aa)).

N-terminus interacts with Dredd. Interacts with imd.

The protein localises to the cytoplasm. Functionally, component of the IMD signaling pathway and is required for the host defense against Gram-negative bacteria. Interacts with Dredd, promotes cleavage of Dredd and is necessary and sufficient for enhancing Dredd-induced apoptosis. In Drosophila pseudoobscura pseudoobscura (Fruit fly), this protein is Fas-associated death domain protein (Fadd).